The following is a 145-amino-acid chain: uncharacterized protein (145 aa).

Residues 86-110 (CERCGEEIPEPRLCAIPWTRYCAKC) form a dksA C4-type zinc finger.

This is an uncharacterized protein from Aquifex aeolicus (strain VF5).